The primary structure comprises 185 residues: Regulator of rDNA transcription protein 13 (185 aa).

WD repeat units lie at residues 9–48 (GHTDRIYSTIYDHERKRCISASMDTTIRIWDLENIRNNGE), 71–108 (GHRALVGLLGLSDKFLVSASVDGSIRCWDANTYFLKHF), and 111–148 (HTQLNTITALHVSDEVLVSGSEGLLNIYDLNSGLLVRS).

Functionally, may be involved in the modulation of rDNA transcription. This Saccharomyces cerevisiae (strain ATCC 204508 / S288c) (Baker's yeast) protein is Regulator of rDNA transcription protein 13 (RRT13).